The following is a 404-amino-acid chain: Advanced glycosylation end product-specific receptor (404 aa).

The first 22 residues, 1–22, serve as a signal peptide directing secretion; it reads MAAGTAVGAWVLVLSLWGAVVG. The Ig-like V-type domain occupies 23–116; it reads AQNITARIGE…KETKSNYRVR (94 aa). The Extracellular segment spans residues 23–342; it reads AQNITARIGE…VGGSGLGTLA (320 aa). N25 and N81 each carry an N-linked (GlcNAc...) asparagine glycan. Cystine bridges form between C38–C99 and C144–C208. Ig-like C2-type domains follow at residues 124–221 and 227–317; these read PEIV…RALR and PRVW…RAVS. A helical transmembrane segment spans residues 343-363; it reads LALGILGGLGTAALLIGVILW. At 364–404 the chain is on the cytoplasmic side; that stretch reads QRRQRRGEERKAPENQEEEEERAELNQSEEPEAGESSTGGP. Residues 367–404 are disordered; it reads QRRGEERKAPENQEEEEERAELNQSEEPEAGESSTGGP. Residues 378–396 are compositionally biased toward acidic residues; the sequence is NQEEEEERAELNQSEEPEA. The residue at position 391 (S391) is a Phosphoserine; by PKC/PRKCZ and ATM.

As to quaternary structure, constitutive homodimer; disulfide-linked. Forms homooligomers. Interacts with S100A1 and APP. Interacts with S100B, S100A12 and S100A14. Interacts with TIRAP. Interacts with HMGB1. Interacts with LGP2; this interaction plays an important role in AGER-mediated pro-inflammatory responses and cytokine release. Interacts with double-strand break repair protein MRE11 which is a core component of the MRN complex. The interaction enhances MRE11 endonuclease activity and promotes DNA repair. Interacts with the MCM2-7 complex via interaction with complex member MCM2; the interaction is increased following DNA replication stress and stabilizes the MCM2-7 complex at replication forks. Interacts with longistatin, a protein from the saliva of the tick, Haemaphysalis longicornis; the interaction attenuates AGER-mediated production of reactive oxygen species (ROS), activation of NF-kappa-B and expression of adhesion molecules and cytokines in human endothelial cells. Phosphorylated on its cytoplasmic domain by PKCzeta/PRKCZ upon ligand binding. Phosphorylated by ATM following DNA damage. Post-translationally, targeted by the ubiquitin E3 ligase subunit FBXO10 to mediate its ubiquitination and degradation. Endothelial cells. Increased expression in pre-term labor and preeclampsia placentas compared to controls.

It localises to the cell membrane. The protein resides in the cell projection. It is found in the phagocytic cup. The protein localises to the early endosome. Its subcellular location is the nucleus. It localises to the secreted. Cell surface pattern recognition receptor that senses endogenous stress signals with a broad ligand repertoire including advanced glycation end products, S100 proteins, high-mobility group box 1 protein/HMGB1, amyloid beta/APP oligomers, nucleic acids, histones, phospholipids and glycosaminoglycans. Advanced glycosylation end products are nonenzymatically glycosylated proteins which accumulate in vascular tissue in aging and at an accelerated rate in diabetes. These ligands accumulate at inflammatory sites during the pathogenesis of various diseases including diabetes, vascular complications, neurodegenerative disorders and cancers, and RAGE transduces their binding into pro-inflammatory responses. Upon ligand binding, uses TIRAP and MYD88 as adapters to transduce the signal ultimately leading to the induction of inflammatory cytokines IL6, IL8 and TNFalpha through activation of NF-kappa-B. Interaction with S100A12 on endothelium, mononuclear phagocytes, and lymphocytes triggers cellular activation, with generation of key pro-inflammatory mediators. Interaction with S100B after myocardial infarction may play a role in myocyte apoptosis by activating ERK1/2 and p53/TP53 signaling. Contributes to the translocation of amyloid-beta peptide (ABPP) across the cell membrane from the extracellular to the intracellular space in cortical neurons. ABPP-initiated RAGE signaling, especially stimulation of p38 mitogen-activated protein kinase (MAPK), has the capacity to drive a transport system delivering ABPP as a complex with RAGE to the intraneuronal space. Participates in endothelial albumin transcytosis together with HMGB1 through the RAGE/SRC/Caveolin-1 pathway, leading to endothelial hyperpermeability. Mediates the loading of HMGB1 in extracellular vesicles (EVs) that shuttle HMGB1 to hepatocytes by transferrin-mediated endocytosis and subsequently promote hepatocyte pyroptosis by activating the NLRP3 inflammasome. Binds to DNA and promotes extracellular hypomethylated DNA (CpG DNA) uptake by cells via the endosomal route to activate inflammatory responses. Mediates phagocytosis by non-professional phagocytes (NPP) and this is enhanced by binding to ligands including RNA, DNA, HMGB1 and histones. Promotes NPP-mediated phagocytosis of Saccharomyces cerevisiae spores by binding to RNA attached to the spore wall. Also promotes NPP-mediated phagocytosis of apoptotic cells. Following DNA damage, recruited to DNA double-strand break sites where it colocalizes with the MRN repair complex via interaction with double-strand break repair protein MRE11. Enhances the endonuclease activity of MRE11, promoting the end resection of damaged DNA. Promotes DNA damage repair in trophoblasts which enhances trophoblast invasion and contributes to placental development and maintenance. Protects cells from DNA replication stress by localizing to damaged replication forks where it stabilizes the MCM2-7 complex and promotes faithful progression of the replication fork. Mediates the production of reactive oxygen species (ROS) in human endothelial cells. The sequence is that of Advanced glycosylation end product-specific receptor (AGER) from Homo sapiens (Human).